The following is a 508-amino-acid chain: Photosystem II CP47 reaction center protein (508 aa).

Transmembrane regions (helical) follow at residues 21 to 36, 101 to 115, 140 to 156, 203 to 218, 237 to 252, and 457 to 472; these read SVHL…WAGS, IILS…IWHW, GIHL…FGAF, IAAG…FHLS, VLSS…AFVV, and TFAL…HGAR.

The protein belongs to the PsbB/PsbC family. PsbB subfamily. In terms of assembly, PSII is composed of 1 copy each of membrane proteins PsbA, PsbB, PsbC, PsbD, PsbE, PsbF, PsbH, PsbI, PsbJ, PsbK, PsbL, PsbM, PsbT, PsbX, PsbY, PsbZ, Psb30/Ycf12, at least 3 peripheral proteins of the oxygen-evolving complex and a large number of cofactors. It forms dimeric complexes. The cofactor is Binds multiple chlorophylls. PSII binds additional chlorophylls, carotenoids and specific lipids..

The protein localises to the plastid. It localises to the chloroplast thylakoid membrane. One of the components of the core complex of photosystem II (PSII). It binds chlorophyll and helps catalyze the primary light-induced photochemical processes of PSII. PSII is a light-driven water:plastoquinone oxidoreductase, using light energy to abstract electrons from H(2)O, generating O(2) and a proton gradient subsequently used for ATP formation. This is Photosystem II CP47 reaction center protein from Adiantum capillus-veneris (Maidenhair fern).